A 381-amino-acid polypeptide reads, in one-letter code: Chitin deacetylase 8 (381 aa).

The first 18 residues, 1-18, serve as a signal peptide directing secretion; it reads MKRLSVLCSLLLVAAALG. 2 disulfide bridges follow: Cys-27–Cys-39 and Cys-32–Cys-37. Zn(2+) is bound by residues Asp-63, His-117, and His-121. 5 disulfides stabilise this stretch: Cys-86/Cys-335, Cys-211/Cys-216, Cys-240/Cys-246, Cys-343/Cys-365, and Cys-348/Cys-368. N-linked (GlcNAc...) asparagine glycosylation occurs at Asn-171.

Belongs to the carbohydrate esterase 4 (CE4) family. Zn(2+) serves as cofactor. In terms of tissue distribution, strongly expressed in the midgut. Has little or no expression in other tissues tested.

The protein localises to the secreted. It carries out the reaction [(1-&gt;4)-N-acetyl-beta-D-glucosaminyl](n) + n H2O = chitosan + n acetate. Functionally, hydrolyzes the N-acetamido groups of N-acetyl-D-glucosamine (GlcNAc) residues in chitin. Shows activity towards the chitinous oligomers GlcNAc(3), GlcNAc(4), GlcNAc(5) and GlcNAc(6), but not GlcNAc or GlcNAc(2). Requires the substrate to occupy subsites 0, +1, and +2 for optimum catalysis. The sequence is that of Chitin deacetylase 8 from Bombyx mori (Silk moth).